Reading from the N-terminus, the 35-residue chain is Mu/omega-theraphotoxin-Tap1a (35 aa).

Disulfide bonds link C3-C18, C10-C23, and C17-C30.

This sequence belongs to the neurotoxin 10 (Hwtx-1) family. 59 (Tltx) subfamily. As to expression, expressed by the venom gland.

The protein resides in the secreted. In terms of biological role, gating-modifier toxin that inhibits both sodium (Nav) and calcium (Cav3) channels by inducing hyperpolarizing shift in voltage-dependence of activation and steady state inactivation. Inhibits Nav1.1/SCN1A, Nav1.2/SCN2A, Nav1.3/SCN3A, Nav1.6/SCN6A, Nav1.7/SCN9A and Cav3.1/CACNA1G sodium and calcium channels at nanomolar concentrations (IC(50)=81-301 nM). Surprisingly, selectively slows fast inactivation of Nav1.3/SCN3A. Also shows moderate inhibition of Cav3.2/CACNA1H calcium channels (IC(50)=1233 nM). Ex vivo, nearly ablates neuronal mechanosensitivity in afferent fibers innervating the colon and the bladder. In vivo, in a mouse model of irritable bowel syndrome, intracolonic administration of the toxin reverses colonic mechanical hypersensitivity. The polypeptide is Mu/omega-theraphotoxin-Tap1a (Theraphosa apophysis (Goliath pinkfoot tarantula)).